A 582-amino-acid polypeptide reads, in one-letter code: Methionine--tRNA ligase (582 aa).

Positions 24–34 (PYIYAVPHLGN) match the 'HIGH' region motif. 4 residues coordinate Zn(2+): Cys156, Cys159, Cys169, and Cys172. Positions 346 to 350 (KFSKS) match the 'KMSKS' region motif. Residue Lys349 coordinates ATP.

Belongs to the class-I aminoacyl-tRNA synthetase family. MetG type 1 subfamily. It depends on Zn(2+) as a cofactor.

The protein localises to the cytoplasm. It carries out the reaction tRNA(Met) + L-methionine + ATP = L-methionyl-tRNA(Met) + AMP + diphosphate. Its function is as follows. Is required not only for elongation of protein synthesis but also for the initiation of all mRNA translation through initiator tRNA(fMet) aminoacylation. The protein is Methionine--tRNA ligase of Caldivirga maquilingensis (strain ATCC 700844 / DSM 13496 / JCM 10307 / IC-167).